The primary structure comprises 61 residues: Large ribosomal subunit protein bL28 (61 aa).

The segment at 1 to 26 is disordered; the sequence is MAKDYVTGKRTHFGNTRSHALNHSRR.

It belongs to the bacterial ribosomal protein bL28 family.

The polypeptide is Large ribosomal subunit protein bL28 (Lactiplantibacillus plantarum (strain ATCC BAA-793 / NCIMB 8826 / WCFS1) (Lactobacillus plantarum)).